A 922-amino-acid polypeptide reads, in one-letter code: Pyruvate dehydrogenase E1 component (922 aa).

As to quaternary structure, homodimer. Part of an unusual ODH/PDH supercomplex, consisting of AceE (E1), AceF (E2), and Lpd (E3) together with OdhA (E1+E2). Mg(2+) is required as a cofactor. The cofactor is thiamine diphosphate.

The enzyme catalyses N(6)-[(R)-lipoyl]-L-lysyl-[protein] + pyruvate + H(+) = N(6)-[(R)-S(8)-acetyldihydrolipoyl]-L-lysyl-[protein] + CO2. Its function is as follows. Is a specific component of the pyruvate dehydrogenase (PDH) complex, that catalyzes the overall conversion of pyruvate to acetyl-CoA and CO(2). AceE has reductase activity with pyruvate but does not react with 2-oxoglutarate. In Corynebacterium glutamicum (strain ATCC 13032 / DSM 20300 / JCM 1318 / BCRC 11384 / CCUG 27702 / LMG 3730 / NBRC 12168 / NCIMB 10025 / NRRL B-2784 / 534), this protein is Pyruvate dehydrogenase E1 component (aceE).